The following is a 92-amino-acid chain: Protein S100-B (92 aa).

Position 2 is an N-acetylserine (Ser2). 2 consecutive EF-hand domains span residues 13–48 and 49–84; these read DVFH…LEEI and KEQE…VTTA. His16 lines the Zn(2+) pocket. The Ca(2+) site is built by Ser19, Glu22, and Asp24. Residue His26 coordinates Zn(2+). Ca(2+)-binding residues include Asp62, Asp64, Asp66, Glu68, and Glu73. The Zn(2+) site is built by His86 and His91.

The protein belongs to the S-100 family. As to quaternary structure, dimer of either two alpha chains, or two beta chains, or one alpha and one beta chain. The S100B dimer binds two molecules of STK38. Interacts with CACYBP in a calcium-dependent manner. Interacts with ATAD3A; this interaction probably occurs in the cytosol prior to ATAD3A mitochondrial targeting. Interacts with S100A6. The S100B dimer interacts with two molecules of CAPZA1. Interacts with AGER. Interacts with PPP5C (via TPR repeats); the interaction is calcium-dependent and modulates PPP5C activity. Interacts with TPPP; this interaction inhibits TPPP dimerization. Interacts with isoform CLSTN3beta of CLSTN3; interaction promotes secretion.

It is found in the cytoplasm. It localises to the nucleus. Its subcellular location is the secreted. Its function is as follows. Small zinc- and- and calcium-binding protein that is highly expressed in astrocytes and constitutes one of the most abundant soluble proteins in brain. Weakly binds calcium but binds zinc very tightly-distinct binding sites with different affinities exist for both ions on each monomer. Physiological concentrations of potassium ion antagonize the binding of both divalent cations, especially affecting high-affinity calcium-binding sites. Acts as a neurotrophic factor that promotes astrocytosis and axonal proliferation. Involved in innervation of thermogenic adipose tissue by acting as an adipocyte-derived neurotrophic factor that promotes sympathetic innervation of adipose tissue. Binds to and initiates the activation of STK38 by releasing autoinhibitory intramolecular interactions within the kinase. Interaction with AGER after myocardial infarction may play a role in myocyte apoptosis by activating ERK1/2 and p53/TP53 signaling. Could assist ATAD3A cytoplasmic processing, preventing aggregation and favoring mitochondrial localization. May mediate calcium-dependent regulation on many physiological processes by interacting with other proteins, such as TPR-containing proteins, and modulating their activity. This is Protein S100-B from Mus musculus (Mouse).